The primary structure comprises 600 residues: Dihydroxy-acid dehydratase (600 aa).

Asp82 lines the Mg(2+) pocket. A [2Fe-2S] cluster-binding site is contributed by Cys123. Asp124 and Lys125 together coordinate Mg(2+). Lys125 is modified (N6-carboxylysine). Cys192 serves as a coordination point for [2Fe-2S] cluster. Glu489 is a binding site for Mg(2+). The Proton acceptor role is filled by Ser515.

The protein belongs to the IlvD/Edd family. Homodimer. Requires [2Fe-2S] cluster as cofactor. Mg(2+) serves as cofactor.

It catalyses the reaction (2R)-2,3-dihydroxy-3-methylbutanoate = 3-methyl-2-oxobutanoate + H2O. It carries out the reaction (2R,3R)-2,3-dihydroxy-3-methylpentanoate = (S)-3-methyl-2-oxopentanoate + H2O. It functions in the pathway amino-acid biosynthesis; L-isoleucine biosynthesis; L-isoleucine from 2-oxobutanoate: step 3/4. The protein operates within amino-acid biosynthesis; L-valine biosynthesis; L-valine from pyruvate: step 3/4. Functionally, functions in the biosynthesis of branched-chain amino acids. Catalyzes the dehydration of (2R,3R)-2,3-dihydroxy-3-methylpentanoate (2,3-dihydroxy-3-methylvalerate) into 2-oxo-3-methylpentanoate (2-oxo-3-methylvalerate) and of (2R)-2,3-dihydroxy-3-methylbutanoate (2,3-dihydroxyisovalerate) into 2-oxo-3-methylbutanoate (2-oxoisovalerate), the penultimate precursor to L-isoleucine and L-valine, respectively. In Bacteroides fragilis (strain YCH46), this protein is Dihydroxy-acid dehydratase.